A 49-amino-acid polypeptide reads, in one-letter code: Large ribosomal subunit protein bL33 (49 aa).

This sequence belongs to the bacterial ribosomal protein bL33 family.

This is Large ribosomal subunit protein bL33 from Natranaerobius thermophilus (strain ATCC BAA-1301 / DSM 18059 / JW/NM-WN-LF).